An 83-amino-acid polypeptide reads, in one-letter code: NAD(P)H-quinone oxidoreductase subunit L (83 aa).

2 consecutive transmembrane segments (helical) span residues 18–38 and 53–73; these read ILAY…ALFF and LLVY…APFL.

It belongs to the complex I NdhL subunit family. As to quaternary structure, NDH-1 can be composed of about 15 different subunits; different subcomplexes with different compositions have been identified which probably have different functions.

Its subcellular location is the cellular thylakoid membrane. The enzyme catalyses a plastoquinone + NADH + (n+1) H(+)(in) = a plastoquinol + NAD(+) + n H(+)(out). The catalysed reaction is a plastoquinone + NADPH + (n+1) H(+)(in) = a plastoquinol + NADP(+) + n H(+)(out). Functionally, NDH-1 shuttles electrons from an unknown electron donor, via FMN and iron-sulfur (Fe-S) centers, to quinones in the respiratory and/or the photosynthetic chain. The immediate electron acceptor for the enzyme in this species is believed to be plastoquinone. Couples the redox reaction to proton translocation, and thus conserves the redox energy in a proton gradient. Cyanobacterial NDH-1 also plays a role in inorganic carbon-concentration. This chain is NAD(P)H-quinone oxidoreductase subunit L, found in Parasynechococcus marenigrum (strain WH8102).